A 133-amino-acid chain; its full sequence is Large ribosomal subunit protein uL16 (133 aa).

Belongs to the universal ribosomal protein uL16 family. As to quaternary structure, part of the 50S ribosomal subunit.

Functionally, binds 23S rRNA and is also seen to make contacts with the A and possibly P site tRNAs. This chain is Large ribosomal subunit protein uL16, found in Blochmanniella floridana.